A 241-amino-acid chain; its full sequence is Ribose-5-phosphate isomerase A (241 aa).

Residues 29–32 (TGTT), 84–87 (DGAD), and 97–100 (KGGG) contribute to the substrate site. Catalysis depends on Glu-106, which acts as the Proton acceptor. Residue Lys-124 participates in substrate binding.

The protein belongs to the ribose 5-phosphate isomerase family. As to quaternary structure, homodimer.

The enzyme catalyses aldehydo-D-ribose 5-phosphate = D-ribulose 5-phosphate. The protein operates within carbohydrate degradation; pentose phosphate pathway; D-ribose 5-phosphate from D-ribulose 5-phosphate (non-oxidative stage): step 1/1. In terms of biological role, catalyzes the reversible conversion of ribose-5-phosphate to ribulose 5-phosphate. This Thermoplasma volcanium (strain ATCC 51530 / DSM 4299 / JCM 9571 / NBRC 15438 / GSS1) protein is Ribose-5-phosphate isomerase A.